Consider the following 291-residue polypeptide: ATP synthase gamma chain (291 aa).

This sequence belongs to the ATPase gamma chain family. F-type ATPases have 2 components, CF(1) - the catalytic core - and CF(0) - the membrane proton channel. CF(1) has five subunits: alpha(3), beta(3), gamma(1), delta(1), epsilon(1). CF(0) has three main subunits: a, b and c.

Its subcellular location is the cell inner membrane. Its function is as follows. Produces ATP from ADP in the presence of a proton gradient across the membrane. The gamma chain is believed to be important in regulating ATPase activity and the flow of protons through the CF(0) complex. In Methylobacillus flagellatus (strain ATCC 51484 / DSM 6875 / VKM B-1610 / KT), this protein is ATP synthase gamma chain.